Here is a 246-residue protein sequence, read N- to C-terminus: Large ribosomal subunit protein uL2 (246 aa).

The interval 197-227 (SPYAHPHGGGSHQKGGTPVPKTAPPGQKVGF) is disordered.

The protein belongs to the universal ribosomal protein uL2 family. In terms of assembly, part of the 50S ribosomal subunit. Forms a bridge to the 30S subunit in the 70S ribosome.

Functionally, one of the primary rRNA binding proteins. Required for association of the 30S and 50S subunits to form the 70S ribosome, for tRNA binding and peptide bond formation. It has been suggested to have peptidyltransferase activity; this is somewhat controversial. Makes several contacts with the 16S rRNA in the 70S ribosome. The polypeptide is Large ribosomal subunit protein uL2 (Pyrobaculum aerophilum (strain ATCC 51768 / DSM 7523 / JCM 9630 / CIP 104966 / NBRC 100827 / IM2)).